The sequence spans 159 residues: Phosphopantetheine adenylyltransferase (159 aa).

Residue threonine 10 participates in substrate binding. ATP-binding positions include 10-11 (TF) and histidine 18. Substrate contacts are provided by lysine 42, methionine 74, and arginine 88. ATP contacts are provided by residues 89–91 (GLR), glutamate 99, and 124–130 (WSFISSS).

Belongs to the bacterial CoaD family. In terms of assembly, homohexamer. It depends on Mg(2+) as a cofactor.

The protein resides in the cytoplasm. It carries out the reaction (R)-4'-phosphopantetheine + ATP + H(+) = 3'-dephospho-CoA + diphosphate. Its pathway is cofactor biosynthesis; coenzyme A biosynthesis; CoA from (R)-pantothenate: step 4/5. Functionally, reversibly transfers an adenylyl group from ATP to 4'-phosphopantetheine, yielding dephospho-CoA (dPCoA) and pyrophosphate. The polypeptide is Phosphopantetheine adenylyltransferase (Escherichia coli (strain SMS-3-5 / SECEC)).